Reading from the N-terminus, the 325-residue chain is Phosphate acyltransferase (325 aa).

This sequence belongs to the PlsX family. In terms of assembly, homodimer. Probably interacts with PlsY.

The protein resides in the cytoplasm. It carries out the reaction a fatty acyl-[ACP] + phosphate = an acyl phosphate + holo-[ACP]. The protein operates within lipid metabolism; phospholipid metabolism. Functionally, catalyzes the reversible formation of acyl-phosphate (acyl-PO(4)) from acyl-[acyl-carrier-protein] (acyl-ACP). This enzyme utilizes acyl-ACP as fatty acyl donor, but not acyl-CoA. In Staphylococcus epidermidis (strain ATCC 12228 / FDA PCI 1200), this protein is Phosphate acyltransferase.